The following is a 276-amino-acid chain: Flagellin FljJ (276 aa).

Residues 51-80 form a disordered region; the sequence is RPGAGDMSGLAREDEPGSGDIDRGRGPRAG. Positions 61-75 are enriched in basic and acidic residues; that stretch reads AREDEPGSGDIDRGR.

Belongs to the bacterial flagellin family. As to quaternary structure, in C.crescentus, the flagellar filament is composed of multiple flagellins of 29 kDa; 27 kDa and 25 kDa.

It is found in the secreted. It localises to the bacterial flagellum. Flagellin is the subunit protein which polymerizes to form the filaments of bacterial flagella. In Caulobacter vibrioides (strain ATCC 19089 / CIP 103742 / CB 15) (Caulobacter crescentus), this protein is Flagellin FljJ (fljJ).